Consider the following 472-residue polypeptide: Zinc finger and BTB domain-containing protein 18.2 (472 aa).

One can recognise a BTB domain in the interval 24–91; it reads CDCTVLVGEA…MYEGKLEFSN (68 aa). Basic and acidic residues predominate over residues 127 to 149; it reads KIIDDGEKDDKPVDSEEHHEHSF. Disordered regions lie at residues 127–155, 197–236, and 269–334; these read KIID…SQQK, AGKT…FKPM, and DLLS…LSTS. Positions 205-215 are enriched in low complexity; it reads SSPSSPLSQRS. Positions 279-288 are enriched in polar residues; it reads AKSPKSQQVG. The segment covering 309 to 319 has biased composition (basic and acidic residues); sequence HTREDDLYQDR. 4 consecutive C2H2-type zinc fingers follow at residues 344-366, 384-406, 412-434, and 440-463; these read CICP…LSSH, PTCT…ERTH, FTCG…AVVH, and HACK…RKFH.

This sequence belongs to the krueppel C2H2-type zinc-finger protein family. ZBTB18 subfamily.

The protein resides in the nucleus. In terms of biological role, transcriptional repressor that plays a role in various developmental processes. Specifically binds the consensus DNA sequence 5'-[AC]ACATCTG[GT][AC]-3' which contains the E box core, and acts by recruiting chromatin remodeling multiprotein complexes. This Xenopus laevis (African clawed frog) protein is Zinc finger and BTB domain-containing protein 18.2 (zbtb18.2).